The primary structure comprises 433 residues: Glutamate-1-semialdehyde 2,1-aminomutase (433 aa).

An N6-(pyridoxal phosphate)lysine modification is found at Lys-271.

The protein belongs to the class-III pyridoxal-phosphate-dependent aminotransferase family. HemL subfamily. In terms of assembly, homodimer. Requires pyridoxal 5'-phosphate as cofactor.

Its subcellular location is the cytoplasm. The enzyme catalyses (S)-4-amino-5-oxopentanoate = 5-aminolevulinate. Its pathway is porphyrin-containing compound metabolism; protoporphyrin-IX biosynthesis; 5-aminolevulinate from L-glutamyl-tRNA(Glu): step 2/2. It functions in the pathway porphyrin-containing compound metabolism; chlorophyll biosynthesis. This is Glutamate-1-semialdehyde 2,1-aminomutase from Prochlorococcus marinus (strain AS9601).